The chain runs to 692 residues: Elongation factor G (692 aa).

Residues 8–282 (ERTRNIGIMA…AIVDYLPAPT (275 aa)) form the tr-type G domain. GTP is bound by residues 17-24 (AHIDAGKT), 81-85 (DTPGH), and 135-138 (NKMD).

The protein belongs to the TRAFAC class translation factor GTPase superfamily. Classic translation factor GTPase family. EF-G/EF-2 subfamily.

It is found in the cytoplasm. Catalyzes the GTP-dependent ribosomal translocation step during translation elongation. During this step, the ribosome changes from the pre-translocational (PRE) to the post-translocational (POST) state as the newly formed A-site-bound peptidyl-tRNA and P-site-bound deacylated tRNA move to the P and E sites, respectively. Catalyzes the coordinated movement of the two tRNA molecules, the mRNA and conformational changes in the ribosome. This chain is Elongation factor G, found in Desulforamulus reducens (strain ATCC BAA-1160 / DSM 100696 / MI-1) (Desulfotomaculum reducens).